The primary structure comprises 144 residues: MHLNTLSPAPGSHKARKRCGRGIGSGIGKTGGRGHKGQKSRSGGSVRPGFEGGQMPLKQRLPKFGFTSRKSLVRAEVRLHELNLITGDVVDIHALKDAGLITRNIVAVKVMLSGEITRPITLRGIAVTKGAQAAIEAAGGKVEE.

The disordered stretch occupies residues 1-58 (MHLNTLSPAPGSHKARKRCGRGIGSGIGKTGGRGHKGQKSRSGGSVRPGFEGGQMPLK). The span at 21–31 (RGIGSGIGKTG) shows a compositional bias: gly residues.

Belongs to the universal ribosomal protein uL15 family. As to quaternary structure, part of the 50S ribosomal subunit.

Its function is as follows. Binds to the 23S rRNA. This chain is Large ribosomal subunit protein uL15, found in Colwellia psychrerythraea (strain 34H / ATCC BAA-681) (Vibrio psychroerythus).